The sequence spans 2458 residues: Acetyl-CoA carboxylase 2 (2458 aa).

At S35 the chain carries Phosphoserine. Positions 35-155 (SKSEANLIPS…SPSKEDKKQA (121 aa)) are disordered. A compositionally biased stretch (polar residues) spans 51-60 (SDNSGETPQR). T70 carries the phosphothreonine modification. Residues 77–87 (ASHKGPKDAGR) are compositionally biased toward basic and acidic residues. S91 and S95 each carry phosphoserine. The span at 103 to 146 (PLSSSDAAPSPELQANGTGTQGLEATDTNGLSSSARPQGQQAGS) shows a compositional bias: polar residues. S169, S175, S192, S195, and S200 each carry phosphoserine. The interval 174–193 (SSDEDSVAGSSRESTRKGSR) is disordered. At T207 the chain carries Phosphothreonine. S220 carries the post-translational modification Phosphoserine. At S222 the chain carries Phosphoserine; by AMPK. Residues 259–761 (VIEKVLIANN…DTGWLDYLIA (503 aa)) enclose the Biotin carboxylation domain. The ATP-grasp domain maps to 414 to 609 (DDLQQGKRIS…LPAAQLQIAM (196 aa)). 458–463 (GGGGKG) lines the ATP pocket. Position 469 is a phosphoserine (S469). Mg(2+) is bound by residues E567, E580, and N582. Positions 567, 580, and 582 each coordinate Mn(2+). R584 is a catalytic residue. T753 carries the phosphothreonine modification. A Biotinyl-binding domain is found at 888 to 962 (FEKENDPTVL…EAGCVVARLE (75 aa)). K929 is subject to N6-biotinyllysine. S1340 bears the Phosphoserine mark. A Phosphothreonine modification is found at T1342. Phosphoserine is present on residues S1360 and S1405. In terms of domain architecture, CoA carboxyltransferase N-terminal spans 1695–2025 (PYVTKDLLQA…DNHSPVPIIT (331 aa)). The segment at 1695 to 2345 (PYVTKDLLQA…EDQVKQEILQ (651 aa)) is carboxyltransferase. R1934, K2238, and R2240 together coordinate CoA. In terms of domain architecture, CoA carboxyltransferase C-terminal spans 2029-2345 (PIDREIEFLP…EDQVKQEILQ (317 aa)).

As to quaternary structure, monomer, homodimer, and homotetramer. Forms filamentous polymers. Interacts with MID1IP1; interaction with MID1IP1 promotes oligomerization and increases its activity in a citrate-dependent manner. Requires biotin as cofactor. Mg(2+) is required as a cofactor. It depends on Mn(2+) as a cofactor. Post-translationally, the biotin cofactor is covalently attached to the central biotinyl-binding domain and is required for the catalytic activity. Phosphorylation at Ser-222 by AMPK inactivates the enzyme. Required for the maintenance of skeletal muscle lipid and glucose homeostasis. As to expression, widely expressed with highest levels in heart, skeletal muscle, liver, adipose tissue, mammary gland, adrenal gland and colon. Isoform 3 is expressed in skeletal muscle, adipose tissue and liver (at protein level). Isoform 3 is detected at high levels in adipose tissue with lower levels in heart, liver, skeletal muscle and testis.

It localises to the mitochondrion. It catalyses the reaction hydrogencarbonate + acetyl-CoA + ATP = malonyl-CoA + ADP + phosphate + H(+). Its pathway is lipid metabolism; malonyl-CoA biosynthesis; malonyl-CoA from acetyl-CoA: step 1/1. Activity is increased by oligomerization of the protein into filaments. The oligomerization and the activity of the enzyme are inhibited by phosphorylation at Ser-222. Inhibited by its product, malonyl-CoA. Activated by citrate. Activation by MID1IP1 is citrate-dependent. Soraphen A, inhibits the enzyme by preventing the formation of active filamentous oligomers. Mitochondrial enzyme that catalyzes the carboxylation of acetyl-CoA to malonyl-CoA and plays a central role in fatty acid metabolism. Catalyzes a 2 steps reaction starting with the ATP-dependent carboxylation of the biotin carried by the biotin carboxyl carrier (BCC) domain followed by the transfer of the carboxyl group from carboxylated biotin to acetyl-CoA. Through the production of malonyl-CoA that allosterically inhibits carnitine palmitoyltransferase 1 at the mitochondria, negatively regulates fatty acid oxidation. Together with its cytosolic isozyme ACACA, which is involved in de novo fatty acid biosynthesis, promotes lipid storage. This chain is Acetyl-CoA carboxylase 2, found in Homo sapiens (Human).